Here is a 1340-residue protein sequence, read N- to C-terminus: Iron-sulfur cluster assembly protein SufD (1340 aa).

Positions 477–487 are enriched in low complexity; that stretch reads NSLKHNNNNTK. 5 disordered regions span residues 477 to 498, 723 to 743, 765 to 794, 835 to 865, and 992 to 1055; these read NSLK…ERSS, HGKD…NYLN, NVST…QSTV, EKNE…GEKK, and NIPT…NNIQ. Residues 723–734 show a composition bias toward basic and acidic residues; that stretch reads HGKDNTQHDDKN. The segment covering 782 to 794 has biased composition (polar residues); the sequence is NPDTETNNEQSTV. Residues 1022 to 1037 show a composition bias toward polar residues; the sequence is DNLLQNDQATNSNVEI.

Belongs to the iron-sulfur cluster assembly SufBD family. In terms of assembly, component of a complex composed of SufB, SufC and SufD in a stoichiometric ratio of 1:2:1. Interacts with SufB. Interacts with SufC; the interaction enhances the ATPase activity of SufC.

Its subcellular location is the plastid. It localises to the apicoplast. Its pathway is cofactor biosynthesis; iron-sulfur cluster biosynthesis. In terms of biological role, participates in the sulfur mobilization (SUF) pathway for iron-sulfur (Fe-S) cluster biogenesis. As part of a complex consisting of SufB-SufC(2)-SufD, involved in assembly of [4Fe-4S] clusters. Enhances the ATPase activity of SufC. This Plasmodium berghei (strain Anka) protein is Iron-sulfur cluster assembly protein SufD.